The sequence spans 122 residues: Large ribosomal subunit protein uL14 (122 aa).

It belongs to the universal ribosomal protein uL14 family. Part of the 50S ribosomal subunit. Forms a cluster with proteins L3 and L19. In the 70S ribosome, L14 and L19 interact and together make contacts with the 16S rRNA in bridges B5 and B8.

Functionally, binds to 23S rRNA. Forms part of two intersubunit bridges in the 70S ribosome. In Lachnospira eligens (strain ATCC 27750 / DSM 3376 / VPI C15-48 / C15-B4) (Eubacterium eligens), this protein is Large ribosomal subunit protein uL14.